The sequence spans 399 residues: Cell division protein FtsZ (399 aa).

GTP-binding positions include 18–22 (GGGVN), 105–107 (GTG), Glu-136, Arg-140, and Asp-184. Positions 311–399 (GFDGGQPPSK…EELDVPDFLK (89 aa)) are disordered. The span at 388–399 (AAEELDVPDFLK) shows a compositional bias: acidic residues.

It belongs to the FtsZ family. In terms of assembly, homodimer. Polymerizes to form a dynamic ring structure in a strictly GTP-dependent manner. Interacts directly with several other division proteins.

It localises to the cytoplasm. Essential cell division protein that forms a contractile ring structure (Z ring) at the future cell division site. The regulation of the ring assembly controls the timing and the location of cell division. One of the functions of the FtsZ ring is to recruit other cell division proteins to the septum to produce a new cell wall between the dividing cells. Binds GTP and shows GTPase activity. In Streptomyces coelicolor (strain ATCC BAA-471 / A3(2) / M145), this protein is Cell division protein FtsZ.